A 139-amino-acid polypeptide reads, in one-letter code: GSK3B-interacting protein (139 aa).

Residues 41–45 (VNDVL) are required for PRKAR2A interaction; contributes to a protective effect against H(2)O(2)-induced apoptosis. The interaction with GSK3B and acts as a GSK3B inhibitor stretch occupies residues 115–139 (SPAYREAFGNALLQRLEALKREGQS).

It belongs to the GSKIP family. Forms a complex composed of PRKAR2A or PRKAR2B, GSK3B and GSKIP through GSKIP interaction; facilitates PKA-induced phosphorylation of GSK3B leading to GSK3B inactivation; recruits DNM1L through GSK3B for PKA-mediated phosphorylation of DNM1L; promotes beta-catenin degradation through GSK3B-induced phosphorylation of beta-catenin; stabilizes beta-catenin and enhances Wnt-induced signaling through PKA-induced phosphorylation of beta-catenin. Interacts with GSK3B; induces GSK3B-mediated phosphorylation of GSKIP and inhibits GSK3B kinase activity. Phosphorylated by GSK3B.

The protein localises to the cytoplasm. It localises to the nucleus. In terms of biological role, A-kinase anchoring protein for GSK3B and PKA that regulates or facilitates their kinase activity towards their targets. The ternary complex enhances Wnt-induced signaling by facilitating the GSK3B- and PKA-induced phosphorylation of beta-catenin leading to beta-catenin degradation and stabilization respectively. Upon cAMP activation, the ternary complex contributes to neuroprotection against oxidative stress-induced apoptosis by facilitating the PKA-induced phosphorylation of DML1 and PKA-induced inactivation of GSK3B. During neurite outgrowth promotes neuron proliferation; while increases beta-catenin-induced transcriptional activity through GSK3B kinase activity inhibition, reduces N-cadherin level to promote cell cycle progression. May play a role in cleft palate formation and is required for postnatal life through modulation of the activity of GSK3B during development. The polypeptide is GSK3B-interacting protein (Bos taurus (Bovine)).